The primary structure comprises 194 residues: FMN-dependent NADH:quinone oxidoreductase (194 aa).

FMN-binding positions include Ser10, 16–18 (SQS), 91–94 (MYNF), and 135–138 (TRGG).

This sequence belongs to the azoreductase type 1 family. Homodimer. FMN serves as cofactor.

It catalyses the reaction 2 a quinone + NADH + H(+) = 2 a 1,4-benzosemiquinone + NAD(+). It carries out the reaction N,N-dimethyl-1,4-phenylenediamine + anthranilate + 2 NAD(+) = 2-(4-dimethylaminophenyl)diazenylbenzoate + 2 NADH + 2 H(+). In terms of biological role, quinone reductase that provides resistance to thiol-specific stress caused by electrophilic quinones. Functionally, also exhibits azoreductase activity. Catalyzes the reductive cleavage of the azo bond in aromatic azo compounds to the corresponding amines. This is FMN-dependent NADH:quinone oxidoreductase from Vibrio parahaemolyticus serotype O3:K6 (strain RIMD 2210633).